Consider the following 132-residue polypeptide: Sec-independent protein translocase protein TatB (132 aa).

The chain crosses the membrane as a helical span at residues 1–21 (MFDIGFWELVLISVVGLVVLG). The tract at residues 70-132 (GMEDLSPELK…KVSAADKKAE (63 aa)) is disordered. 2 stretches are compositionally biased toward basic and acidic residues: residues 96-108 (YADK…ETAK) and 115-132 (SAEK…KKAE).

It belongs to the TatB family. In terms of assembly, the Tat system comprises two distinct complexes: a TatABC complex, containing multiple copies of TatA, TatB and TatC subunits, and a separate TatA complex, containing only TatA subunits. Substrates initially bind to the TatABC complex, which probably triggers association of the separate TatA complex to form the active translocon.

It localises to the cell inner membrane. Part of the twin-arginine translocation (Tat) system that transports large folded proteins containing a characteristic twin-arginine motif in their signal peptide across membranes. Together with TatC, TatB is part of a receptor directly interacting with Tat signal peptides. TatB may form an oligomeric binding site that transiently accommodates folded Tat precursor proteins before their translocation. The polypeptide is Sec-independent protein translocase protein TatB (Vibrio parahaemolyticus serotype O3:K6 (strain RIMD 2210633)).